Here is a 111-residue protein sequence, read N- to C-terminus: Putative single-stranded DNA-binding protein ycf41 (111 aa).

Residues 1–98 (MNSCTLLVQI…FSTSRIFKYK (98 aa)) enclose the SSB domain.

It localises to the plastid. It is found in the chloroplast. In Pyropia yezoensis (Susabi-nori), this protein is Putative single-stranded DNA-binding protein ycf41 (ycf41).